The primary structure comprises 217 residues: Protein-L-isoaspartate O-methyltransferase 2 (217 aa).

Residue Ser64 is part of the active site.

It belongs to the methyltransferase superfamily. L-isoaspartyl/D-aspartyl protein methyltransferase family.

The protein localises to the cytoplasm. The catalysed reaction is [protein]-L-isoaspartate + S-adenosyl-L-methionine = [protein]-L-isoaspartate alpha-methyl ester + S-adenosyl-L-homocysteine. Its function is as follows. Catalyzes the methyl esterification of L-isoaspartyl residues in peptides and proteins that result from spontaneous decomposition of normal L-aspartyl and L-asparaginyl residues. It plays a role in the repair and/or degradation of damaged proteins. The chain is Protein-L-isoaspartate O-methyltransferase 2 from Rhodopseudomonas palustris (strain HaA2).